A 478-amino-acid chain; its full sequence is Cytochrome c-552 (478 aa).

Residues 1–26 form the signal peptide; the sequence is MTRIKINARRIFSLLIPFFFFTSVHA. H94 is a heme c binding site. 3 residues coordinate heme: C122, C125, and K126. Residues C160, C163, H164, C209, C212, and H213 each contribute to the heme c site. Ca(2+) is bound by residues E215, Y216, K261, and Q263. A substrate-binding site is contributed by Y216. H264 contacts substrate. Heme c is bound by residues H275, C282, C285, H286, H301, C314, C317, H318, and H393.

The protein belongs to the cytochrome c-552 family. Ca(2+) serves as cofactor. Requires heme c as cofactor.

Its subcellular location is the periplasm. The enzyme catalyses 6 Fe(III)-[cytochrome c] + NH4(+) + 2 H2O = 6 Fe(II)-[cytochrome c] + nitrite + 8 H(+). The protein operates within nitrogen metabolism; nitrate reduction (assimilation). Catalyzes the reduction of nitrite to ammonia, consuming six electrons in the process. The sequence is that of Cytochrome c-552 from Escherichia coli O9:H4 (strain HS).